Here is a 380-residue protein sequence, read N- to C-terminus: Zinc finger protein neuro-d4 (380 aa).

The segment at A132–A164 is disordered. The segment at Y190–H213 adopts a C2H2-type zinc-finger fold. 2 PHD-type zinc fingers span residues E262–C321 and C318–Q368. Zn(2+) is bound by residues C265, C268, C286, C289, H294, C297, C315, C318, C321, C324, C336, C339, H344, C347, C362, and C365.

This sequence belongs to the requiem/DPF family. As to quaternary structure, component of neuron-specific chromatin remodeling complex (nBAF complex), a subfamily of ATP-dependent SWI/SNF chromatin remodeling complexes.

Its subcellular location is the cytoplasm. The protein localises to the nucleus. May have an important role in developing neurons by participating in regulation of cell survival, possibly as a neurospecific transcription factor. Belongs to the neuron-specific chromatin remodeling complex (nBAF complex) and plays a role in neural development. The protein is Zinc finger protein neuro-d4 of Gallus gallus (Chicken).